The following is a 152-amino-acid chain: Xanthine-guanine phosphoribosyltransferase (152 aa).

Residues 37-38 (RG) and 88-96 (DDLVDTGNT) each bind 5-phospho-alpha-D-ribose 1-diphosphate. A Mg(2+)-binding site is contributed by Asp89. Asp92 and Ile135 together coordinate guanine. Positions 92 and 135 each coordinate xanthine. GMP is bound by residues 92–96 (DTGNT) and 134–135 (WI).

The protein belongs to the purine/pyrimidine phosphoribosyltransferase family. XGPT subfamily. As to quaternary structure, homotetramer. Mg(2+) is required as a cofactor.

The protein resides in the cell inner membrane. It catalyses the reaction GMP + diphosphate = guanine + 5-phospho-alpha-D-ribose 1-diphosphate. The enzyme catalyses XMP + diphosphate = xanthine + 5-phospho-alpha-D-ribose 1-diphosphate. It carries out the reaction IMP + diphosphate = hypoxanthine + 5-phospho-alpha-D-ribose 1-diphosphate. It participates in purine metabolism; GMP biosynthesis via salvage pathway; GMP from guanine: step 1/1. The protein operates within purine metabolism; XMP biosynthesis via salvage pathway; XMP from xanthine: step 1/1. In terms of biological role, purine salvage pathway enzyme that catalyzes the transfer of the ribosyl-5-phosphate group from 5-phospho-alpha-D-ribose 1-diphosphate (PRPP) to the N9 position of the 6-oxopurines guanine and xanthine to form the corresponding ribonucleotides GMP (guanosine 5'-monophosphate) and XMP (xanthosine 5'-monophosphate), with the release of PPi. To a lesser extent, also acts on hypoxanthine. This chain is Xanthine-guanine phosphoribosyltransferase, found in Actinobacillus succinogenes (strain ATCC 55618 / DSM 22257 / CCUG 43843 / 130Z).